A 171-amino-acid polypeptide reads, in one-letter code: Small ribosomal subunit protein uS5 (171 aa).

Residues 15–78 (LEEKVVKINR…EKAKKQLVRI (64 aa)) form the S5 DRBM domain.

It belongs to the universal ribosomal protein uS5 family. As to quaternary structure, part of the 30S ribosomal subunit. Contacts proteins S4 and S8.

In terms of biological role, with S4 and S12 plays an important role in translational accuracy. Functionally, located at the back of the 30S subunit body where it stabilizes the conformation of the head with respect to the body. This Onion yellows phytoplasma (strain OY-M) protein is Small ribosomal subunit protein uS5.